We begin with the raw amino-acid sequence, 384 residues long: Glucans biosynthesis protein C (384 aa).

The next 10 membrane-spanning stretches (helical) occupy residues 17-37 (AWLM…THSW), 54-74 (FIHA…SYML), 91-111 (VGIP…ILLQ), 140-160 (LWFL…FTWF), 173-193 (AISL…YAAI), 212-232 (FIVM…LAFI), 240-260 (FTTP…AYLL), 274-294 (TESV…FSLG), 311-331 (ASLF…AYIT), and 338-358 (LIGF…LYEI).

It belongs to the acyltransferase 3 family. OpgC subfamily.

It is found in the cell membrane. Its pathway is glycan metabolism; osmoregulated periplasmic glucan (OPG) biosynthesis. Its function is as follows. Necessary for the succinyl substitution of periplasmic glucans. Could catalyze the transfer of succinyl residues from the cytoplasmic side of the membrane to the nascent glucan backbones on the periplasmic side of the membrane. The chain is Glucans biosynthesis protein C from Salmonella heidelberg (strain SL476).